A 433-amino-acid polypeptide reads, in one-letter code: MINLFRGLLVVLCFASAMVSAEEKNILVTSGSDRAAPIAVVPFGWQGGSVLPEDMAEIISNDLRNSGYYAPIPKQNMISLPTQASEVIFRDWKALGAQYVMVGNITPAGGRLQIQYALFNVATEQQVLTGNVSGTNDQLRDMAHYIADQSFEKLTGIKGAFSTRMLYVTAERFSENNTRYTLQRSDYDGARAVTLLQSREPILSPRFAPDGKRIAYVSFEQKRPRIFVQHIDTGRREQITNFEGLNGAPAWSPDGSKLAFVLSKDGNPEIYVINLASRQLSRVTNDSSIDTEPFFGKDGSTLYFTSDRGGKPQIYKTNINGGGAERVTFVGNYNANPKLSADEKTLVMIHRQDGFTNFKVAVQDLARGSVKILTDSNLDESPTVAPNGTMVIYATRQQGRGVLMLVSINGRVRLPLPTAQGEVREPSWSPYLN.

The first 21 residues, 1–21 (MINLFRGLLVVLCFASAMVSA), serve as a signal peptide directing secretion.

Belongs to the TolB family. The Tol-Pal system is composed of five core proteins: the inner membrane proteins TolA, TolQ and TolR, the periplasmic protein TolB and the outer membrane protein Pal. They form a network linking the inner and outer membranes and the peptidoglycan layer.

The protein resides in the periplasm. Its function is as follows. Part of the Tol-Pal system, which plays a role in outer membrane invagination during cell division and is important for maintaining outer membrane integrity. This is Tol-Pal system protein TolB from Pseudomonas syringae pv. syringae (strain B728a).